We begin with the raw amino-acid sequence, 182 residues long: Trypsin inhibitor 2 (182 aa).

Pyrrolidone carboxylic acid is present on glutamine 1. Cystine bridges form between cysteine 40–cysteine 84 and cysteine 136–cysteine 147.

Belongs to the protease inhibitor I3 (leguminous Kunitz-type inhibitor) family.

The sequence is that of Trypsin inhibitor 2 from Psophocarpus tetragonolobus (Winged bean).